Here is a 344-residue protein sequence, read N- to C-terminus: Methionine import ATP-binding protein MetN (344 aa).

The region spanning 2–241 (IELQGLSQRF…PQHDVTRAMI (240 aa)) is the ABC transporter domain. 38-45 (GRSGAGKS) is a binding site for ATP.

It belongs to the ABC transporter superfamily. Methionine importer (TC 3.A.1.24) family. The complex is composed of two ATP-binding proteins (MetN), two transmembrane proteins (MetI) and a solute-binding protein (MetQ).

The protein localises to the cell inner membrane. It catalyses the reaction L-methionine(out) + ATP + H2O = L-methionine(in) + ADP + phosphate + H(+). It carries out the reaction D-methionine(out) + ATP + H2O = D-methionine(in) + ADP + phosphate + H(+). In terms of biological role, part of the ABC transporter complex MetNIQ involved in methionine import. Responsible for energy coupling to the transport system. This is Methionine import ATP-binding protein MetN from Cupriavidus necator (strain ATCC 17699 / DSM 428 / KCTC 22496 / NCIMB 10442 / H16 / Stanier 337) (Ralstonia eutropha).